The chain runs to 115 residues: Ubiquitin-related modifier 1 (115 aa).

At G115 the chain carries 1-thioglycine. Residue G115 forms a Glycyl lysine isopeptide (Gly-Lys) (interchain with K-? in acceptor proteins) linkage.

Belongs to the URM1 family. In terms of processing, C-terminal thiocarboxylation occurs in 2 steps, it is first acyl-adenylated (-COAMP) via the hesA/moeB/thiF part of UBA4, then thiocarboxylated (-COSH) via the rhodanese domain of UBA4.

It is found in the cytoplasm. It participates in tRNA modification; 5-methoxycarbonylmethyl-2-thiouridine-tRNA biosynthesis. Its function is as follows. Acts as a sulfur carrier required for 2-thiolation of mcm(5)S(2)U at tRNA wobble positions of cytosolic tRNA(Lys), tRNA(Glu) and tRNA(Gln). Serves as sulfur donor in tRNA 2-thiolation reaction by being thiocarboxylated (-COSH) at its C-terminus by the MOCS3 homolog UBA4. The sulfur is then transferred to tRNA to form 2-thiolation of mcm(5)S(2)U. Prior mcm(5) tRNA modification by the elongator complex is required for 2-thiolation. Also acts as a ubiquitin-like protein (UBL) that is covalently conjugated via an isopeptide bond to lysine residues of target proteins such as AHP1. The thiocarboxylated form serves as substrate for conjugation and oxidative stress specifically induces the formation of UBL-protein conjugates. The protein is Ubiquitin-related modifier 1 of Coccidioides immitis (strain RS) (Valley fever fungus).